Consider the following 108-residue polypeptide: MYSCITFFQRLERSILSGNKTATIRDKSDSHYLVGQMLDACTHEDNRKMCQIEILSIEYVTFSELNRAHANAEGLPFLFMLKWIVRKIYPTSNDLFFISFRVVTIDIL.

Residues 5-102 (ITFFQRLERS…NDLFFISFRV (98 aa)) form the ASCH domain. The active-site Proton acceptor is K20. Catalysis depends on T23, which acts as the Nucleophile. Catalysis depends on E73, which acts as the Proton donor.

The protein belongs to the N(4)-acetylcytidine amidohydrolase family.

The enzyme catalyses N(4)-acetylcytidine + H2O = cytidine + acetate + H(+). It carries out the reaction N(4)-acetyl-2'-deoxycytidine + H2O = 2'-deoxycytidine + acetate + H(+). It catalyses the reaction N(4)-acetylcytosine + H2O = cytosine + acetate + H(+). Functionally, catalyzes the hydrolysis of N(4)-acetylcytidine (ac4C). The polypeptide is N(4)-acetylcytidine amidohydrolase (Moritella marina (Vibrio marinus)).